We begin with the raw amino-acid sequence, 89 residues long: Small ribosomal subunit protein uS15 (89 aa).

Belongs to the universal ribosomal protein uS15 family. Part of the 30S ribosomal subunit. Forms a bridge to the 50S subunit in the 70S ribosome, contacting the 23S rRNA.

Its function is as follows. One of the primary rRNA binding proteins, it binds directly to 16S rRNA where it helps nucleate assembly of the platform of the 30S subunit by binding and bridging several RNA helices of the 16S rRNA. Functionally, forms an intersubunit bridge (bridge B4) with the 23S rRNA of the 50S subunit in the ribosome. The protein is Small ribosomal subunit protein uS15 of Anoxybacillus flavithermus (strain DSM 21510 / WK1).